Here is a 227-residue protein sequence, read N- to C-terminus: ATP-dependent Clp protease proteolytic subunit (227 aa).

S120 (nucleophile) is an active-site residue. H145 is an active-site residue.

Belongs to the peptidase S14 family. Fourteen ClpP subunits assemble into 2 heptameric rings which stack back to back to give a disk-like structure with a central cavity, resembling the structure of eukaryotic proteasomes.

It localises to the cytoplasm. It catalyses the reaction Hydrolysis of proteins to small peptides in the presence of ATP and magnesium. alpha-casein is the usual test substrate. In the absence of ATP, only oligopeptides shorter than five residues are hydrolyzed (such as succinyl-Leu-Tyr-|-NHMec, and Leu-Tyr-Leu-|-Tyr-Trp, in which cleavage of the -Tyr-|-Leu- and -Tyr-|-Trp bonds also occurs).. Its function is as follows. Cleaves peptides in various proteins in a process that requires ATP hydrolysis. Has a chymotrypsin-like activity. Plays a major role in the degradation of misfolded proteins. The protein is ATP-dependent Clp protease proteolytic subunit of Rickettsia bellii (strain RML369-C).